A 209-amino-acid chain; its full sequence is dITP/XTP pyrophosphatase (209 aa).

Residue 22-27 (SHNQGK) coordinates substrate. The Proton acceptor role is filled by Asp-83. Asp-83 serves as a coordination point for Mg(2+). Substrate contacts are provided by residues Ser-84, 167-170 (FGYD), Lys-190, and 195-196 (HR).

This sequence belongs to the HAM1 NTPase family. As to quaternary structure, homodimer. Mg(2+) serves as cofactor.

The enzyme catalyses XTP + H2O = XMP + diphosphate + H(+). It carries out the reaction dITP + H2O = dIMP + diphosphate + H(+). It catalyses the reaction ITP + H2O = IMP + diphosphate + H(+). In terms of biological role, pyrophosphatase that catalyzes the hydrolysis of nucleoside triphosphates to their monophosphate derivatives, with a high preference for the non-canonical purine nucleotides XTP (xanthosine triphosphate), dITP (deoxyinosine triphosphate) and ITP. Seems to function as a house-cleaning enzyme that removes non-canonical purine nucleotides from the nucleotide pool, thus preventing their incorporation into DNA/RNA and avoiding chromosomal lesions. The polypeptide is dITP/XTP pyrophosphatase (Zymomonas mobilis subsp. mobilis (strain ATCC 31821 / ZM4 / CP4)).